Consider the following 579-residue polypeptide: Putative fatty-acid--CoA ligase fadD21 (579 aa).

It belongs to the ATP-dependent AMP-binding enzyme family.

In Mycobacterium leprae (strain TN), this protein is Putative fatty-acid--CoA ligase fadD21 (fadD21).